The primary structure comprises 427 residues: Serine protease HTRA2, mitochondrial (427 aa).

A disordered region spans residues 33-55; the sequence is HTASSSKGSGGDNSKDKENNGQN. The chain crosses the membrane as a helical span at residues 66–86; that stretch reads SAFQFCVPFSLGALVSAVLIE. Positions 78-81 match the IAP-binding motif; sequence ALVS. Residues 144–307 form a serine protease region; it reads SNGSGFVIEQ…IPIDYVKVFL (164 aa). Active-site charge relay system residues include histidine 162, aspartate 194, and serine 271. One can recognise a PDZ domain in the interval 330 to 415; sequence MGITMLTLTP…DLEIVILRGV (86 aa).

This sequence belongs to the peptidase S1C family. As to quaternary structure, interacts with th/DIAP1 (via BIR 2 domain).

The protein resides in the mitochondrion intermembrane space. It is found in the mitochondrion membrane. It catalyses the reaction Cleavage of non-polar aliphatic amino-acids at the P1 position, with a preference for Val, Ile and Met. At the P2 and P3 positions, Arg is selected most strongly with a secondary preference for other hydrophilic residues.. Its function is as follows. Serine protease that shows proteolytic activity against a non-specific substrate beta-casein. Promotes or induces cell death either by direct binding to and inhibition of BIRC proteins (also called inhibitor of apoptosis proteins, IAPs), leading to an increase in caspase activity, or by a BIRC inhibition-independent, caspase-independent and serine protease activity-dependent mechanism. Can antagonize antiapoptotic activity of th/Diap1 by directly inducing the degradation of th/Diap1. This chain is Serine protease HTRA2, mitochondrial, found in Drosophila pseudoobscura pseudoobscura (Fruit fly).